The sequence spans 396 residues: Beta-1,4-galactosyltransferase 3 (396 aa).

Residues 1 to 10 lie on the Cytoplasmic side of the membrane; sequence MLRRLLERPC. The chain crosses the membrane as a helical; Signal-anchor for type II membrane protein span at residues 11–31; sequence TLALLVGSQLAVMMYLSLGGF. Topologically, residues 32–396 are lumenal; it reads RSLSALFGRE…ANHTAPHGSH (365 aa). Residue Asn-57 is glycosylated (N-linked (GlcNAc...) asparagine). A disulfide bond links Cys-80 and Cys-122. 133 to 137 is a binding site for UDP-alpha-D-galactose; sequence PHRAR. N-linked (GlcNAc...) asparagine glycosylation is present at Asn-169. Residues 172 to 174, 199 to 200, Tyr-229, and Trp-261 each bind UDP-alpha-D-galactose; these read FNR and VD. The cysteines at positions 193 and 212 are disulfide-linked. Residue Asp-200 participates in Mn(2+) binding. 263 to 266 contacts N-acetyl-D-glucosamine; sequence GEDD. His-294 is a Mn(2+) binding site. 294 to 296 contributes to the UDP-alpha-D-galactose binding site; the sequence is HRG. Position 306 (Arg-306) interacts with N-acetyl-D-glucosamine. Asn-340 carries N-linked (GlcNAc...) asparagine glycosylation. Positions 341–396 are disordered; that stretch reads ITADIGTDPRGPRTSSGPHYPPGSSQAFRQEMLQRRPPARPGPLPTANHTAPHGSH. Residues 353 to 368 show a composition bias toward polar residues; the sequence is RTSSGPHYPPGSSQAF. Residue Asn-388 is glycosylated (N-linked (GlcNAc...) asparagine).

Belongs to the glycosyltransferase 7 family. Mn(2+) is required as a cofactor.

It is found in the golgi apparatus. The protein resides in the golgi stack membrane. The enzyme catalyses an N-acetyl-beta-D-glucosaminyl derivative + UDP-alpha-D-galactose = a beta-D-galactosyl-(1-&gt;4)-N-acetyl-beta-D-glucosaminyl derivative + UDP + H(+). The catalysed reaction is N-acetyl-D-glucosamine + UDP-alpha-D-galactose = beta-D-galactosyl-(1-&gt;4)-N-acetyl-D-glucosamine + UDP + H(+). It carries out the reaction a beta-D-GlcNAc-(1-&gt;3)-beta-D-Gal-(1-&gt;4)-beta-D-Glc-(1&lt;-&gt;1)-Cer(d18:1(4E)) + UDP-alpha-D-galactose = a neolactoside nLc4Cer(d18:1(4E)) + UDP + H(+). It catalyses the reaction a beta-D-glucosylceramide + UDP-alpha-D-galactose = a beta-D-galactosyl-(1-&gt;4)-beta-D-glucosyl-(1&lt;-&gt;1)-ceramide + UDP + H(+). The enzyme catalyses a neolactoside IV(3)-beta-GlcNAc-nLc4Cer + UDP-alpha-D-galactose = a neolactoside nLc6Cer + UDP + H(+). The protein operates within protein modification; protein glycosylation. Its function is as follows. Responsible for the synthesis of complex-type N-linked oligosaccharides in many glycoproteins as well as the carbohydrate moieties of glycolipids. In Bos taurus (Bovine), this protein is Beta-1,4-galactosyltransferase 3 (B4GALT3).